Consider the following 811-residue polypeptide: tRNA(Met) cytidine acetyltransferase TmcA (811 aa).

ATP is bound by residues Gln267 and Arg439. Residues 473–662 (KKEVYLEEPD…GEFTAIVLKP (190 aa)) enclose the N-acetyltransferase domain. Acetyl-CoA contacts are provided by residues 589-591 (IAT), Glu629, and Arg636.

The protein belongs to the TmcA family.

It localises to the cytoplasm. The enzyme catalyses cytidine(34) in elongator tRNA(Met) + acetyl-CoA + ATP + H2O = N(4)-acetylcytidine(34) in elongator tRNA(Met) + ADP + phosphate + CoA + H(+). The catalysed reaction is a cytidine in RNA + acetyl-CoA + ATP + H2O = an N(4)-acetylcytidine in RNA + ADP + phosphate + CoA + H(+). It carries out the reaction a cytidine in tRNA + acetyl-CoA + ATP + H2O = an N(4)-acetylcytidine in tRNA + ADP + phosphate + CoA + H(+). It catalyses the reaction a cytidine in mRNA + acetyl-CoA + ATP + H2O = an N(4)-acetylcytidine in mRNA + ADP + phosphate + CoA + H(+). In terms of biological role, catalyzes the formation of N(4)-acetylcytidine (ac(4)C) at the wobble position of tRNA(Met), by using acetyl-CoA as an acetyl donor and ATP (or GTP). Functionally, catalyzes the formation of 267 N(4)-acetylcytidine (ac(4)C) sites in RNA, almost always on the middle C of a CCG motif. Modifications are found in rRNA, ncRNA, mRNA and tRNA. More acetylation is observed at 95 than at 75 or 85 degrees Celsius. This Thermococcus sp. (strain AM4) protein is tRNA(Met) cytidine acetyltransferase TmcA.